Reading from the N-terminus, the 546-residue chain is MGKNLTIVMLVFVSMAGWMFGADTGSIGGITNMRDFQSRFADRYNPVTDSYSYSSARQGLITGMVNVGSFFGCFLSSPLMDRIGKRTSIMFWTIVYLIGIILQVTAVPSWVQIMVAKIWTGLSIGALSVLAPGFQSEVAPADLRGTIVTTYQLAVTGGIFIAACINMGTHKLHKTAQWRVSMGINLLWGIITFIGISFLPESPRYLISVGRDEEALQIMAKNNDLPIEHEVIQTEYHVIKSDCEAELAGGPATWPEIFGPDIRYRTFLGLGVMSLQQLTGDNYYFYYGFEVFEGTGMNSPYLSALILDAVNFGCTFGGLFVLEFFGRRMPLIIGALWQSITFFIYAAVGNRALTRKNGTSNHRAGAVMIVFSCLFIFSFAQTWGPAAYVIVGESYPIRYRSKCAAVATTGNWLWGFLISFFTPFITNSIGFKYGYIFAACNLCAACIIFLFAHETKGLTLEEINELYISGAKPWMPRPKNLGNFTKQQEEVREKSRGVQGESAAHLENVDGEEGIEDSSNDISSTTSSDGRAKPESSYHDQEEQFA.

At 1 to 9 the chain is on the cytoplasmic side; that stretch reads MGKNLTIVM. The chain crosses the membrane as a helical span at residues 10–30; sequence LVFVSMAGWMFGADTGSIGGI. Residues 31–58 lie on the Extracellular side of the membrane; the sequence is TNMRDFQSRFADRYNPVTDSYSYSSARQ. A helical membrane pass occupies residues 59-79; it reads GLITGMVNVGSFFGCFLSSPL. The Cytoplasmic segment spans residues 80-87; it reads MDRIGKRT. Residues 88–108 traverse the membrane as a helical segment; the sequence is SIMFWTIVYLIGIILQVTAVP. At 109–112 the chain is on the extracellular side; the sequence is SWVQ. A helical transmembrane segment spans residues 113–133; that stretch reads IMVAKIWTGLSIGALSVLAPG. At 134–144 the chain is on the cytoplasmic side; sequence FQSEVAPADLR. A helical transmembrane segment spans residues 145 to 165; it reads GTIVTTYQLAVTGGIFIAACI. Residues 166-179 lie on the Extracellular side of the membrane; sequence NMGTHKLHKTAQWR. Residues 180–200 traverse the membrane as a helical segment; the sequence is VSMGINLLWGIITFIGISFLP. The Cytoplasmic segment spans residues 201–266; that stretch reads ESPRYLISVG…IFGPDIRYRT (66 aa). The chain crosses the membrane as a helical span at residues 267 to 285; it reads FLGLGVMSLQQLTGDNYYF. At 286–301 the chain is on the extracellular side; sequence YYGFEVFEGTGMNSPY. Residues 302 to 322 form a helical membrane-spanning segment; that stretch reads LSALILDAVNFGCTFGGLFVL. Topologically, residues 323 to 328 are cytoplasmic; the sequence is EFFGRR. The helical transmembrane segment at 329-349 threads the bilayer; the sequence is MPLIIGALWQSITFFIYAAVG. Residues 350 to 363 lie on the Extracellular side of the membrane; it reads NRALTRKNGTSNHR. The N-linked (GlcNAc...) asparagine glycan is linked to Asn357. Residues 364-384 form a helical membrane-spanning segment; sequence AGAVMIVFSCLFIFSFAQTWG. Residues 385–404 lie on the Cytoplasmic side of the membrane; sequence PAAYVIVGESYPIRYRSKCA. Residues 405–425 form a helical membrane-spanning segment; that stretch reads AVATTGNWLWGFLISFFTPFI. Residues 426-432 lie on the Extracellular side of the membrane; sequence TNSIGFK. The helical transmembrane segment at 433–453 threads the bilayer; that stretch reads YGYIFAACNLCAACIIFLFAH. Over 454-546 the chain is Cytoplasmic; sequence ETKGLTLEEI…SYHDQEEQFA (93 aa). Residues 486–546 form a disordered region; sequence KQQEEVREKS…SYHDQEEQFA (61 aa). Over residues 487–496 the composition is skewed to basic and acidic residues; that stretch reads QQEEVREKSR. Over residues 509 to 519 the composition is skewed to acidic residues; it reads VDGEEGIEDSS. Residues 520–529 show a composition bias toward low complexity; the sequence is NDISSTTSSD. A phosphoserine mark is found at Ser528 and Ser537. The span at 530-546 shows a compositional bias: basic and acidic residues; the sequence is GRAKPESSYHDQEEQFA.

It belongs to the major facilitator superfamily. Sugar transporter (TC 2.A.1.1) family.

The protein resides in the membrane. In terms of biological role, high-affinity glucose transporter. The protein is High-affinity glucose transporter ght5 (ght5) of Schizosaccharomyces pombe (strain 972 / ATCC 24843) (Fission yeast).